A 443-amino-acid chain; its full sequence is Xaa-Pro dipeptidase (443 aa).

Residues aspartate 248, aspartate 259, histidine 339, glutamate 384, and glutamate 423 each coordinate Mn(2+).

It belongs to the peptidase M24B family. Bacterial-type prolidase subfamily. It depends on Mn(2+) as a cofactor.

It catalyses the reaction Xaa-L-Pro dipeptide + H2O = an L-alpha-amino acid + L-proline. Functionally, splits dipeptides with a prolyl residue in the C-terminal position. The sequence is that of Xaa-Pro dipeptidase from Colwellia psychrerythraea (strain 34H / ATCC BAA-681) (Vibrio psychroerythus).